Consider the following 937-residue polypeptide: Periplasmic nitrate reductase (937 aa).

Residues 1–42 (MTSKIQGKKPTLSRRDFIKSAAAASAAASVGLSIPSVMSAEA) constitute a signal peptide (tat-type signal). The region spanning 49–110 (WKWDKSVCRF…FCAKIMYGAD (62 aa)) is the 4Fe-4S Mo/W bis-MGD-type domain. The [4Fe-4S] cluster site is built by C56, C59, C63, and C96. Mo-bis(molybdopterin guanine dinucleotide) is bound by residues K98, Q166, N191, C195, 228 to 235 (WGANMAEM), M433, Q437, N543, 568 to 569 (SE), K591, D618, and 827 to 836 (TGRVLEHWHS). W903 lines the substrate pocket. Positions 911 and 928 each coordinate Mo-bis(molybdopterin guanine dinucleotide).

The protein belongs to the prokaryotic molybdopterin-containing oxidoreductase family. NasA/NapA/NarB subfamily. Component of the periplasmic nitrate reductase NapAB complex composed of NapA and NapB. [4Fe-4S] cluster is required as a cofactor. It depends on Mo-bis(molybdopterin guanine dinucleotide) as a cofactor. Predicted to be exported by the Tat system. The position of the signal peptide cleavage has not been experimentally proven.

It localises to the periplasm. The catalysed reaction is 2 Fe(II)-[cytochrome] + nitrate + 2 H(+) = 2 Fe(III)-[cytochrome] + nitrite + H2O. Catalytic subunit of the periplasmic nitrate reductase complex NapAB. Receives electrons from NapB and catalyzes the reduction of nitrate to nitrite. This Helicobacter hepaticus (strain ATCC 51449 / 3B1) protein is Periplasmic nitrate reductase.